A 426-amino-acid chain; its full sequence is DNA polymerase processivity factor component OPG148 (426 aa).

Belongs to the orthopoxvirus OPG148 family. Interacts with the DNA polymerase catalytic subunit OPG071. Interacts with UDG/OPG116. Component of the uracil-DNA glycosylase(UDG)-OPG148-polymerase complex; OPG148 and UDG form a heterodimeric processivity factor that associates with OPG071 to form the processive polymerase holoenzyme. Interacts with OPG117.

In terms of biological role, plays an essential role in viral DNA replication by acting as the polymerase processivity factor together with protein OPG116. Serves as a bridge which links the DNA polymerase OPG071 and the uracil DNA glycosylase. The polypeptide is DNA polymerase processivity factor component OPG148 (OPG148) (Cynomys gunnisoni (Gunnison's prairie dog)).